Reading from the N-terminus, the 203-residue chain is Ribosomal RNA small subunit methyltransferase G (203 aa).

Residues Gly-75, Leu-80, 126–127 (VE), and Arg-141 each bind S-adenosyl-L-methionine.

It belongs to the methyltransferase superfamily. RNA methyltransferase RsmG family.

Its subcellular location is the cytoplasm. The catalysed reaction is guanosine(527) in 16S rRNA + S-adenosyl-L-methionine = N(7)-methylguanosine(527) in 16S rRNA + S-adenosyl-L-homocysteine. Its function is as follows. Specifically methylates the N7 position of guanine in position 527 of 16S rRNA. The sequence is that of Ribosomal RNA small subunit methyltransferase G from Ruthia magnifica subsp. Calyptogena magnifica.